The following is a 116-amino-acid chain: Large ribosomal subunit protein bL19 (116 aa).

Belongs to the bacterial ribosomal protein bL19 family.

This protein is located at the 30S-50S ribosomal subunit interface and may play a role in the structure and function of the aminoacyl-tRNA binding site. This chain is Large ribosomal subunit protein bL19, found in Pseudomonas putida (strain W619).